Consider the following 676-residue polypeptide: MATSQRKILVTSALPYANGPIHLGHMLEYIQTDIWSRYQKLRGHECHYICADDAHGTPIMLKAQQLGMAPEEMIAQVNKEHQQDFADFNIAFDNYHSTHSEENRVLASDIYLKLRANGYIKSKSISQLFDPEKSMFLPDRFVKGTCPKCKSPDQYGDNCDACGATYSPTELINPKSAVSGATPVMKDTEHFFFDLPAFEDMLKEWTRSGALQTEMANKLDEWFEQGLQQWDITRDAPYFGFEIPDAPGKYFYVWLDAPIGYMGSFKNLCDKRPELSFDEFWAKDSKAEVYHFIGKDIVYFHSLFWPAMLHGSGYRQPNSVYAHGYVTVNGAKMSKSKGTFIKARTYLDHLDPEYLRYYYAAKLSSRIDDLDLNLEDFAQRVNSDLVGKLVNLASRTAGFITKRFDGKLAKIADTTLTDAFLAKQEQIAEFYETREYGKAMREIMALADIANGFVADAAPWQLVKQDDQQEAAHQVCSNALNLFRILVTYLKPVLPRLALDVEAFFQQTLTWDSLGQDMAGHEIAPFKAMMQRVELDKVNAMVADSKENLQATSEPEAPKGPLASDPISDTINYEDFAKIDLRIARIVKAEHVAEADKLLKLQLDIGGETRQVFAGIKSAYSPEDLEGKLTVMVANLAPRKMRFGMSEGMVLAAGPGGSDLWILEPHEGAQPGMRVK.

The short motif at 15–25 (PYANGPIHLGH) is the 'HIGH' region element. C146, C149, C159, and C162 together coordinate Zn(2+). Positions 332-336 (KMSKS) match the 'KMSKS' region motif. An ATP-binding site is contributed by K335. The tRNA-binding domain maps to 575 to 676 (DFAKIDLRIA…EGAQPGMRVK (102 aa)).

Belongs to the class-I aminoacyl-tRNA synthetase family. MetG type 1 subfamily. In terms of assembly, homodimer. The cofactor is Zn(2+).

The protein localises to the cytoplasm. The catalysed reaction is tRNA(Met) + L-methionine + ATP = L-methionyl-tRNA(Met) + AMP + diphosphate. Its function is as follows. Is required not only for elongation of protein synthesis but also for the initiation of all mRNA translation through initiator tRNA(fMet) aminoacylation. The polypeptide is Methionine--tRNA ligase (Shewanella sp. (strain MR-7)).